A 120-amino-acid chain; its full sequence is LOB domain-containing protein 8 (120 aa).

The LOB domain maps to 8 to 109 (RPCCVCITKN…AYLHELEEKI (102 aa)).

Belongs to the LOB domain-containing protein family.

This is LOB domain-containing protein 8 (LBD8) from Arabidopsis thaliana (Mouse-ear cress).